A 626-amino-acid polypeptide reads, in one-letter code: Chaperone protein HtpG (626 aa).

Residues 1–339 are a; substrate-binding; the sequence is MSTNQETRGF…SNDLPLNVSR (339 aa). Residues 340-555 form a b region; sequence EILQDNKVTA…NDQMTTQMAK (216 aa). Residues 556–626 are c; the sequence is LFAAAGQPVP…FIKRINKLLG (71 aa).

This sequence belongs to the heat shock protein 90 family. Homodimer.

It localises to the cytoplasm. In terms of biological role, molecular chaperone. Has ATPase activity. This Aggregatibacter actinomycetemcomitans (Actinobacillus actinomycetemcomitans) protein is Chaperone protein HtpG.